Consider the following 33-residue polypeptide: MSDIN-like toxin proprotein 2 (33 aa).

Positions M1–P10 are excised as a propeptide. A cross-link (cyclopeptide (Ile-Pro)) is located at residues I11 to P18. Positions C19–R33 are excised as a propeptide.

Belongs to the MSDIN fungal toxin family. In terms of processing, processed by the macrocyclase-peptidase enzyme POPB to yield a toxic cyclic octapeptide. POPB first removes 10 residues from the N-terminus. Conformational trapping of the remaining peptide forces the enzyme to release this intermediate rather than proceed to macrocyclization. The enzyme rebinds the remaining peptide in a different conformation and catalyzes macrocyclization of the N-terminal 8 residues.

In terms of biological role, probable toxin that belongs to the MSDIN-like toxin family responsible for a large number of food poisoning cases and deaths. This is MSDIN-like toxin proprotein 2 from Amanita phalloides (Death cap).